The chain runs to 836 residues: RNA-binding protein 12B-A (836 aa).

An RRM 1 domain is found at 154-229 (PYLFLRGLPY…RFIEVMQGSE (76 aa)). Residues 237–277 (GTATEGGDTPRMRSEEHSPSRRINGRHFRKRSHSKSPRARS) are disordered. Positions 244-255 (DTPRMRSEEHSP) are enriched in basic and acidic residues. Residues 259-277 (INGRHFRKRSHSKSPRARS) are compositionally biased toward basic residues. RRM domains are found at residues 283–359 (FYVH…PVSR) and 401–478 (LCIY…LISE). Disordered regions lie at residues 539–572 (GHFK…PWEE) and 620–644 (SQEH…RRSR). Over residues 550-572 (QSDRRSPEDFRHSPEDYRHPWEE) the composition is skewed to basic and acidic residues. Phosphoserine is present on Ser703. Position 758 is an N6-acetyllysine (Lys758). One can recognise an RRM 4 domain in the interval 760–836 (IPVKISNLPF…GPRKVKLSLL (77 aa)).

In Mus musculus (Mouse), this protein is RNA-binding protein 12B-A (Rbm12b1).